Here is a 377-residue protein sequence, read N- to C-terminus: Lactosylceramide 1,3-N-acetyl-beta-D-glucosaminyltransferase (377 aa).

At 1–12 (MLISARRLRRCQ) the chain is on the cytoplasmic side. Residues 13 to 30 (FFQLLTSCFVLSLMALLV) traverse the membrane as a helical; Signal-anchor for type II membrane protein segment. Residues 31–377 (QEDNSLINHV…DTYPCSAAWS (347 aa)) are Lumenal-facing. Residues N56, N167, and N275 are each glycosylated (N-linked (GlcNAc...) asparagine).

This sequence belongs to the glycosyltransferase 31 family.

Its subcellular location is the golgi apparatus membrane. It carries out the reaction a beta-D-Gal-(1-&gt;4)-beta-D-Glc-(1&lt;-&gt;1)-Cer(d18:1(4E)) + UDP-N-acetyl-alpha-D-glucosamine = a beta-D-GlcNAc-(1-&gt;3)-beta-D-Gal-(1-&gt;4)-beta-D-Glc-(1&lt;-&gt;1)-Cer(d18:1(4E)) + UDP + H(+). It catalyses the reaction a neolactoside nLc4Cer(d18:1(4E)) + UDP-N-acetyl-alpha-D-glucosamine = a neolactoside IV(3)-beta-GlcNAc-nLc4Cer(d18:1(4E)) + UDP + H(+). Its pathway is protein modification; protein glycosylation. Its function is as follows. Beta-1,3-N-acetylglucosaminyltransferase that plays a key role in the synthesis of lacto- or neolacto-series carbohydrate chains on glycolipids. The sequence is that of Lactosylceramide 1,3-N-acetyl-beta-D-glucosaminyltransferase (b3gnt5) from Xenopus tropicalis (Western clawed frog).